A 148-amino-acid chain; its full sequence is UPF0756 membrane protein CKO_01811 (148 aa).

A run of 4 helical transmembrane segments spans residues 14–34 (ALGF…LIIV), 51–71 (LTVG…SGSL), 86–106 (LVAI…VTLM), and 121–141 (VLGV…AGLV).

This sequence belongs to the UPF0756 family.

Its subcellular location is the cell membrane. The protein is UPF0756 membrane protein CKO_01811 of Citrobacter koseri (strain ATCC BAA-895 / CDC 4225-83 / SGSC4696).